Reading from the N-terminus, the 392-residue chain is uncharacterized protein (392 aa).

An N-terminal signal peptide occupies residues Met1–Gly19. Cys20 carries N-palmitoyl cysteine lipidation. The S-diacylglycerol cysteine moiety is linked to residue Cys20. Residues Ser148–Glu173 form a disordered region. Over residues Ser151–Gly160 the composition is skewed to gly residues.

This sequence belongs to the TP013X lipoprotein family.

It localises to the cell membrane. This is an uncharacterized protein from Treponema pallidum (strain Nichols).